The chain runs to 158 residues: MVPKLFTSQICVLLLFGLLSVEVSLQVKPQQFSWAQWFSIQHIQTTPLHCTSAMRAINRYQPRCKNQNTFLHTTFANVVNVCGNTNITCPRNASLNNCHHSGVQVPLTYCNLTGPQTISNCVYSSTQANMFYVVACDNRDPRDPPQYPVVPVHLDTTI.

The first 27 residues, 1–27 (MVPKLFTSQICVLLLFGLLSVEVSLQV), serve as a signal peptide directing secretion. The C-linked (Man) tryptophan glycan is linked to tryptophan 34. The active-site Proton acceptor is the histidine 42. Intrachain disulfides connect cysteine 50–cysteine 110, cysteine 64–cysteine 121, cysteine 82–cysteine 136, and cysteine 89–cysteine 98. Residue tyrosine 60 is modified to 3'-nitrotyrosine. Residue 65 to 69 (KNQNT) participates in substrate binding. N-linked (GlcNAc...) asparagine glycosylation is found at asparagine 86, asparagine 92, and asparagine 111. Histidine 153 (proton donor) is an active-site residue.

The protein belongs to the pancreatic ribonuclease family. Interacts with and forms a tight 1:1 complex with RNH1. Dimerization of two such complexes may occur.

Its subcellular location is the lysosome. It localises to the cytoplasmic granule. It carries out the reaction an [RNA] containing cytidine + H2O = an [RNA]-3'-cytidine-3'-phosphate + a 5'-hydroxy-ribonucleotide-3'-[RNA].. The enzyme catalyses an [RNA] containing uridine + H2O = an [RNA]-3'-uridine-3'-phosphate + a 5'-hydroxy-ribonucleotide-3'-[RNA].. This is a non-secretory ribonuclease. It is a pyrimidine specific nuclease with a slight preference for U. Cytotoxin and helminthotoxin. Possesses a wide variety of biological activities. The chain is Non-secretory ribonuclease (RNASE2) from Saguinus oedipus (Cotton-top tamarin).